The primary structure comprises 74 residues: Protein translocase subunit SecE (74 aa).

Topologically, residues 1–36 are cytoplasmic; that stretch reads MKTDFNQKIEQLKEFIEECRRVWLVLKKPTKDEYLA. The helical transmembrane segment at 37-62 threads the bilayer; sequence VAKVTALGISLLGIIGYIIHVPATYI. Residues 63-74 lie on the Extracellular side of the membrane; the sequence is KGILKPPTTPRV.

Belongs to the SecE/SEC61-gamma family. In terms of assembly, component of the Sec protein translocase complex. Heterotrimer consisting of alpha (SecY), beta (SecG) and gamma (SecE) subunits. The heterotrimers can form oligomers, although 1 heterotrimer is thought to be able to translocate proteins. Interacts with the ribosome. May interact with SecDF, and other proteins may be involved.

The protein localises to the cell membrane. Essential subunit of the protein translocation channel SecYEG. Clamps together the 2 halves of SecY. May contact the channel plug during translocation. The sequence is that of Protein translocase subunit SecE from Methanocaldococcus jannaschii (strain ATCC 43067 / DSM 2661 / JAL-1 / JCM 10045 / NBRC 100440) (Methanococcus jannaschii).